A 146-amino-acid polypeptide reads, in one-letter code: 3-dehydroquinate dehydratase (146 aa).

The active-site Proton acceptor is the tyrosine 22. Residues asparagine 73, histidine 79, and aspartate 86 each coordinate substrate. Histidine 99 serves as the catalytic Proton donor. Substrate-binding positions include 100-101 and arginine 110; that span reads LS.

Belongs to the type-II 3-dehydroquinase family. As to quaternary structure, homododecamer.

The enzyme catalyses 3-dehydroquinate = 3-dehydroshikimate + H2O. It participates in metabolic intermediate biosynthesis; chorismate biosynthesis; chorismate from D-erythrose 4-phosphate and phosphoenolpyruvate: step 3/7. Catalyzes a trans-dehydration via an enolate intermediate. The polypeptide is 3-dehydroquinate dehydratase (Parasynechococcus marenigrum (strain WH8102)).